Reading from the N-terminus, the 410-residue chain is Peptidase T (410 aa).

A Zn(2+)-binding site is contributed by His77. Asp79 is a catalytic residue. Asp140 provides a ligand contact to Zn(2+). Glu174 functions as the Proton acceptor in the catalytic mechanism. 3 residues coordinate Zn(2+): Glu175, Asp197, and His379.

The protein belongs to the peptidase M20B family. Requires Zn(2+) as cofactor.

The protein resides in the cytoplasm. The catalysed reaction is Release of the N-terminal residue from a tripeptide.. Cleaves the N-terminal amino acid of tripeptides. This Desulfitobacterium hafniense (strain Y51) protein is Peptidase T.